The primary structure comprises 101 residues: Small ribosomal subunit protein bS18c (101 aa).

Belongs to the bacterial ribosomal protein bS18 family. In terms of assembly, part of the 30S ribosomal subunit.

The protein localises to the plastid. It is found in the chloroplast. This chain is Small ribosomal subunit protein bS18c, found in Populus alba (White poplar).